Reading from the N-terminus, the 160-residue chain is FMRFamide-like neuropeptides 13 (160 aa).

Residues 1-17 form the signal peptide; it reads MMTSLLTISMFVVAIQA. Residues 18–43 constitute a propeptide that is removed on maturation; it reads FDSSEIRMLDEQYDTKNPFFQFLENS. A phenylalanine amide mark is found at phenylalanine 60, phenylalanine 73, phenylalanine 85, phenylalanine 98, phenylalanine 110, phenylalanine 123, phenylalanine 135, phenylalanine 146, and phenylalanine 157.

The protein belongs to the FARP (FMRFamide related peptide) family. As to expression, expressed in the ASE sensory neurons, the DD motor neurons, the 15, M3 and M5 cholinergic pharyngeal motoneurons, and the ASG, ASK and BAG neurons.

It is found in the secreted. Functionally, probable FMRFamide-like neuropeptides. Binds to neuronal receptors such as dmsr-1 to promote sleep in response to cellular stress also known as stress-induced sleep (SIS). Plays a role in behaviors associated with SIS, acting in concert with the FMRFamide related peptide, flp-24 and neuropeptide-like protein nlp-8. In terms of biological role, AADGAPLIRF-amide: Inhibits muscle tension in somatic muscle. Acts as a ligand for the npr-22 receptor in vitro. Acts as a ligand for isoform a of the dmsr-1 G-protein coupled receptor in vitro. Its function is as follows. APEASPFIRF-amide: Inhibits muscle tension in somatic muscle. Potent inhibitor of the activity of the dissected pharyngeal myogenic muscle system. Acts as a ligand for isoform a of the dmsr-1 G-protein coupled receptor in vitro. Acts as a ligand for the npr-22 receptor in vitro. Acts as a ligand for isoform a of the dmsr-1 G-protein coupled receptor in vitro. Functionally, acts as a ligand for isoform a of the dmsr-1 G-protein coupled receptor in vitro. The sequence is that of FMRFamide-like neuropeptides 13 from Caenorhabditis elegans.